The following is a 531-amino-acid chain: tRNA(Ile)-lysidine synthase (531 aa).

32-37 contacts ATP; that stretch reads SGGMDS.

It belongs to the tRNA(Ile)-lysidine synthase family.

It is found in the cytoplasm. The enzyme catalyses cytidine(34) in tRNA(Ile2) + L-lysine + ATP = lysidine(34) in tRNA(Ile2) + AMP + diphosphate + H(+). Ligates lysine onto the cytidine present at position 34 of the AUA codon-specific tRNA(Ile) that contains the anticodon CAU, in an ATP-dependent manner. Cytidine is converted to lysidine, thus changing the amino acid specificity of the tRNA from methionine to isoleucine. The polypeptide is tRNA(Ile)-lysidine synthase (Blochmanniella floridana).